The chain runs to 261 residues: [LysW]-aminoadipate/[LysW]-glutamate kinase (261 aa).

Substrate is bound by residues 35 to 36 (GG), Arg-62, and Asn-166.

The protein belongs to the acetylglutamate kinase family. LysZ subfamily.

The protein localises to the cytoplasm. It catalyses the reaction [amino-group carrier protein]-C-terminal-N-(1,4-dicarboxybutan-1-yl)-L-glutamine + ATP = [amino-group carrier protein]-C-terminal-N-(1-carboxy-5-phosphooxy-5-oxopentan-1-yl)-L-glutamine + ADP. The catalysed reaction is [amino-group carrier protein]-C-terminal-gamma-(L-glutamyl)-L-glutamate + ATP = [amino-group carrier protein]-C-terminal-gamma-(5-phospho-L-glutamyl)-L-glutamate + ADP. Its pathway is amino-acid biosynthesis; L-lysine biosynthesis via AAA pathway; L-lysine from L-alpha-aminoadipate (Thermus route): step 2/5. It functions in the pathway amino-acid biosynthesis; L-arginine biosynthesis. Its function is as follows. Involved in both the arginine and lysine biosynthetic pathways. Phosphorylates the LysW-bound precursors glutamate (for arginine biosynthesis), respectively alpha-aminoadipate (for lysine biosynthesis). The sequence is that of [LysW]-aminoadipate/[LysW]-glutamate kinase from Sulfolobus acidocaldarius (strain ATCC 33909 / DSM 639 / JCM 8929 / NBRC 15157 / NCIMB 11770).